Here is a 379-residue protein sequence, read N- to C-terminus: RIB43A-like with coiled-coils protein 1 (379 aa).

Coiled-coil stretches lie at residues 43–111 (EALN…RCEL) and 285–337 (IRKV…EFRR).

This sequence belongs to the RIB43A family. In terms of assembly, microtubule inner protein component of sperm flagellar doublet microtubules.

It localises to the cytoplasm. The protein localises to the cytoskeleton. Its subcellular location is the flagellum axoneme. The chain is RIB43A-like with coiled-coils protein 1 (RIBC1) from Bos taurus (Bovine).